We begin with the raw amino-acid sequence, 315 residues long: Cytosolic Fe-S cluster assembly factor nubp1-A (315 aa).

Positions 1 to 23 (MADIPDNAPQHCPGTDSTEAGKS) are disordered. [4Fe-4S] cluster contacts are provided by Cys-12, Cys-26, Cys-29, and Cys-35. Position 66 to 73 (66 to 73 (GKGGVGKS)) interacts with ATP. [4Fe-4S] cluster-binding residues include Cys-239 and Cys-242.

This sequence belongs to the Mrp/NBP35 ATP-binding proteins family. NUBP1/NBP35 subfamily. In terms of assembly, heterotetramer of 2 nubp1 and 2 nubp2 chains. The cofactor is [4Fe-4S] cluster.

Its subcellular location is the cytoplasm. In terms of biological role, component of the cytosolic iron-sulfur (Fe/S) protein assembly (CIA) machinery. Required for maturation of extramitochondrial Fe-S proteins. The nubp1-nubp2 heterotetramer forms a Fe-S scaffold complex, mediating the de novo assembly of an Fe-S cluster and its transfer to target apoproteins. This is Cytosolic Fe-S cluster assembly factor nubp1-A (nubp1-A) from Xenopus laevis (African clawed frog).